The primary structure comprises 353 residues: Elongation factor Ts (353 aa).

Positions 80 to 83 (TDFV) are involved in Mg(2+) ion dislocation from EF-Tu.

Belongs to the EF-Ts family.

Its subcellular location is the cytoplasm. Its function is as follows. Associates with the EF-Tu.GDP complex and induces the exchange of GDP to GTP. It remains bound to the aminoacyl-tRNA.EF-Tu.GTP complex up to the GTP hydrolysis stage on the ribosome. The chain is Elongation factor Ts from Sulfurovum sp. (strain NBC37-1).